A 320-amino-acid polypeptide reads, in one-letter code: Polyketide transferase FFUJ_12241 (320 aa).

Residues 58–298 (RDITCLAWDP…ILKGKGHLDW (241 aa)) are abhydrolase domain.

This sequence belongs to the polyketide transferase af380 family.

Polyketide transferase; part of the gene cluster that mediates the biosynthesis of fujikurins A-D, secondary metabolites playing a role during rice infection. The polyketide synthase PKS19 acts with the trans-enoyl reductase FFUJ_12240 and the polyketide transferase FFUJ_12241 to produce fujikurins, however, the biosynthesis pathway has not been identified yet. In Gibberella fujikuroi (strain CBS 195.34 / IMI 58289 / NRRL A-6831) (Bakanae and foot rot disease fungus), this protein is Polyketide transferase FFUJ_12241.